The primary structure comprises 438 residues: Nucleolar protein 12 (438 aa).

Disordered stretches follow at residues 1–28 (MGETNSSLDNENTSFVGKLSSSSNVDPT) and 60–94 (ANGVEEAAETIESDTKEVQNIKPKSKKKKKKLNDS). Over residues 60-71 (ANGVEEAAETIE) the composition is skewed to acidic residues. Residues S94 and S95 each carry the phosphoserine modification. The disordered stretch occupies residues 108 to 146 (AEEDEEKDKDSAGLINDEEDKSPAKQSVLEERTSQEDVK). Over residues 135–146 (VLEERTSQEDVK) the composition is skewed to basic and acidic residues. RRM domains lie at 164-262 (KTVF…SVSH) and 270-348 (RCVF…RAKS). Basic residues-rich tracts occupy residues 346 to 357 (AKSTKPKSITRS) and 402 to 412 (AKKKVNKKRKE). 2 disordered regions span residues 346–366 (AKSTKPKSITRSKRGDEKTRT) and 390–438 (EGHR…KKDK).

Belongs to the RRM RBM34 family.

The protein resides in the nucleus. It is found in the nucleolus. Involved in pre-25S rRNA processing. The protein is Nucleolar protein 12 (nop12) of Schizosaccharomyces pombe (strain 972 / ATCC 24843) (Fission yeast).